The primary structure comprises 398 residues: Stomatin-like protein 1 (398 aa).

The short motif at 6–10 (GYRAL) is the Tyrosine-type lysosomal sorting signal element. Ser-28 carries the phosphoserine modification. A helical; Signal-anchor for type III membrane protein transmembrane segment spans residues 58–78 (LISFLGFLLLLVTFPISGWFA). The Cytoplasmic segment spans residues 79 to 398 (LKIVPTYERM…KLEAVLRALK (320 aa)). The SCP2 domain occupies 287 to 398 (KQPLAEGLLT…KLEAVLRALK (112 aa)).

This sequence belongs to the band 7/mec-2 family. Interacts with STOM; may redistribute STOM from the plasma membrane to late endosomes. Interacts with FBXW7 isoform 3 and CDK2. As to expression, ubiquitously expressed at low levels. Expression is highest in brain.

Its subcellular location is the membrane. The protein localises to the late endosome membrane. The protein resides in the membrane raft. It is found in the cell membrane. It localises to the cytoplasmic vesicle. Functionally, may play a role in cholesterol transfer to late endosomes. May play a role in modulating membrane acid-sensing ion channels. Can specifically inhibit proton-gated current of ASIC1 isoform 1. Can increase inactivation speed of ASIC3. May be involved in regulation of proton sensing in dorsal root ganglions. May play a role in protecting FBXW7 isoform 3 from degradation. The chain is Stomatin-like protein 1 (STOML1) from Homo sapiens (Human).